The chain runs to 797 residues: RAS guanyl-releasing protein 1 (797 aa).

Residues 1 to 12 (MGTLGKAREAPR) show a composition bias toward basic and acidic residues. Positions 1 to 23 (MGTLGKAREAPRKPSHGCRAASK) are disordered. The N-terminal Ras-GEF domain occupies 53 to 176 (LGHLAKGASL…RLIDTTQINA (124 aa)). Positions 57 to 110 (AKGASLDDLIDSCIQSFDADGNLCRSNQLLQVMLTMHRIVISSAELLQKVITLY) are ras exchanger motif region; required for transforming activity. Threonine 184 bears the Phosphothreonine; by PKC mark. The Ras-GEF domain occupies 205–436 (EPEELSEHLT…YELSYAREPR (232 aa)). EF-hand domains are found at residues 470–505 (HVQR…FPFS) and 506–532 (FCVM…ASSI). Residues aspartate 483, aspartate 485, aspartate 487, tyrosine 489, and glutamate 494 each coordinate Ca(2+). Residues 541 to 591 (PHNFQETTYLKPTFCDNCAGFLWGVIKQGYRCKDCGMNCHKQCKDLVVFEC) form a Phorbol-ester/DAG-type zinc finger. The tract at residues 673–694 (TQTESQPWIGSEGPSGPFVLSS) is disordered. The interval 686–694 (PSGPFVLSS) is suppress the PT region-mediated translocation to plasma membrane. The tract at residues 718–797 (LVRKRAFVKW…LAQMEQGDCS (80 aa)) is PT region; mediates the BCR-dependent translocation to plasma membrane. Residues 746–786 (PTYQELEQEINTLKADNDALKIQLKYAQKKIESLQLEKSNH) adopt a coiled-coil conformation.

This sequence belongs to the RASGRP family. Homodimer. Forms a signaling complex with DGKZ and HRAS. Interacts with F-actin. Interacts with SKAP1. In terms of tissue distribution, expressed in brain with higher expression in cerebellum, cerebral cortex and amygdala. Expressed in the hematopoietic system. Expressed in T-cells (at protein level). Expressed in NK cells (at protein level).

Its subcellular location is the cytoplasm. The protein resides in the cytosol. The protein localises to the cell membrane. It localises to the golgi apparatus membrane. It is found in the endoplasmic reticulum membrane. Its activity is regulated as follows. Autoinhibited. Activated by diacylglycerol and calcium binding, which induces a conformational change releasing the autoinhibitory state. Regulated by DGKA. Regulated by DGKZ. Regulated by PLC gamma and F-actin polymerization. Functions as a calcium- and diacylglycerol (DAG)-regulated nucleotide exchange factor specifically activating Ras through the exchange of bound GDP for GTP. Activates the Erk/MAP kinase cascade. Regulates T-cell/B-cell development, homeostasis and differentiation by coupling T-lymphocyte/B-lymphocyte antigen receptors to Ras. Regulates NK cell cytotoxicity and ITAM-dependent cytokine production by activation of Ras-mediated ERK and JNK pathways. Functions in mast cell degranulation and cytokine secretion, regulating FcERI-evoked allergic responses. May also function in differentiation of other cell types. The chain is RAS guanyl-releasing protein 1 (RASGRP1) from Homo sapiens (Human).